We begin with the raw amino-acid sequence, 689 residues long: MRHPAFRLTLLASTVAFALAPQAAQAAPSAADRIAGTELIARDALFGNPERANVQISPDGKYLSWVAAVDGVLNVWIAPADNPSQARAVTQDTARGIRSYFWSYQPDTLLYLRDSGGDEDFHLYAVDLKTGQAKDLTPFPKTTAQVAGVSPKHPGTILVGMNDRDAQWHDIYKVDLASGNRTLLEKNDAQIAGYIADADYTLKYAQRSRPDGGADVLRRGANGAWEKFDDIPFEDVLTTSPGGLTLDGKTLYFTDSRGRNTAALFAIDVASGKRTLVLEDARADVGGTLADPATGKVQAVSVDYLRDEWKVVDPAIRADLEKLEAIGPGDVSVNTRTLDDKTWIVAYSAAEAPLVYYRYDRSAGTLTKLFSARPKLEGKPLVPQWPVEIASRDNKTLVSYLTLPRSADANNDGKADAPVPLVLLVHGGPWARDSYGYGGYNQWLANRGYAVLSVNFRGSTGFGKDFTNAGNGEWAGKMHDDLIDAVQWAVKQGVTTQDQVAIMGGSYGGYATLTGLTFTPDAFACGVDIVGPSNLNTLLSTVPPYWASFFEQLAKRMGDPRTDAGKKWLTERSPLTRADQIKKPLLIGQGANDPRVKQAESDQIVKAMQAKNIPVTYVLFPDEGHGFARPENNKAFNAVTEGFLAQCLGGRAEPIGKDFTGSSISVPVGADGVPGLAEALKGHTQEVKK.

Residues 1 to 26 (MRHPAFRLTLLASTVAFALAPQAAQA) form the signal peptide. Residues serine 506, aspartate 593, and histidine 625 each act as charge relay system in the active site.

Belongs to the peptidase S9C family. In terms of assembly, monomer.

Strongly inhibited by the serine protease inhibitor diisopropyl fluorophosphate (DFP), chymostatin, leupeptin, 0.5 mM ZnCl(2), 10 mM o-phenanthlorine and N-tosyl-L-phenyl-alanyl chloromethyl ketone (TPCK), but not by N-tosyl-L-lysyl chloromethyl ketone (TLCK). Activity is not affected significantly by iodoacetate (IAA), L-trans-epoxysuccinyl-leucylamido(4-guanido)butane (E64), pepstatin A and phenylmethanesulfonyl fluoride (PMSF). Activity is stimulated by addition of 0.5 mM CaCl(2), 10 mM EDTA and N-ethylmaleimide (NEM). Functionally, exopeptidase that catalyzes the removal of dipeptide units (NH2-P2-P1- or -P1'-P2'-COOH) from the free amino or carboxy termini. Prefers substrates composed of bulky, hydrophobic amino acids at P1 and P1' positions. Has endopeptidase activity on N-terminally blocked peptide derivatives which contain aromatic amino acid residue at the P1 position. Exopeptidase activity is much higher than its endopeptidase activity. This is Dipeptidyl aminopeptidase BIII from Pseudoxanthomonas mexicana.